Reading from the N-terminus, the 235-residue chain is Uracil-DNA glycosylase (235 aa).

The Proton acceptor role is filled by D71.

It belongs to the uracil-DNA glycosylase (UDG) superfamily. UNG family.

Its subcellular location is the cytoplasm. It catalyses the reaction Hydrolyzes single-stranded DNA or mismatched double-stranded DNA and polynucleotides, releasing free uracil.. Functionally, excises uracil residues from the DNA which can arise as a result of misincorporation of dUMP residues by DNA polymerase or due to deamination of cytosine. The sequence is that of Uracil-DNA glycosylase from Helicobacter hepaticus (strain ATCC 51449 / 3B1).